The chain runs to 192 residues: Large ribosomal subunit protein uL5 (192 aa).

The protein belongs to the universal ribosomal protein uL5 family. Part of the 50S ribosomal subunit; part of the 5S rRNA/L5/L18/L25 subcomplex. Contacts the 5S rRNA and the P site tRNA. Forms a bridge to the 30S subunit in the 70S ribosome.

In terms of biological role, this is one of the proteins that bind and probably mediate the attachment of the 5S RNA into the large ribosomal subunit, where it forms part of the central protuberance. In the 70S ribosome it contacts protein S13 of the 30S subunit (bridge B1b), connecting the 2 subunits; this bridge is implicated in subunit movement. Contacts the P site tRNA; the 5S rRNA and some of its associated proteins might help stabilize positioning of ribosome-bound tRNAs. The protein is Large ribosomal subunit protein uL5 of Paenarthrobacter aurescens (strain TC1).